The sequence spans 407 residues: Probable peptidoglycan glycosyltransferase FtsW (407 aa).

Residues 1 to 25 (MSIDFRNIIKPYPSPIITGRGIDLD) are Cytoplasmic-facing. The helical transmembrane segment at 26–46 (FPMLAGCLALLGLGLVMITSA) threads the bilayer. Residues 47-65 (SSEVAAVQSGNTLYMMIRH) lie on the Periplasmic side of the membrane. A helical transmembrane segment spans residues 66–86 (LVYLVIGLGACIVTMMIPIAT). Over 87 to 89 (WQR) the chain is Cytoplasmic. A helical membrane pass occupies residues 90–110 (LGWLMLIGAFGLLIMVILPGI). Residues 111-119 (GREVNGSMR) are Periplasmic-facing. The helical transmembrane segment at 120 to 140 (WIGFGAFNVQPSEIAKVFVVI) threads the bilayer. Topologically, residues 141-155 (YLAGYLVRRQKEVRE) are cytoplasmic. The chain crosses the membrane as a helical span at residues 156-176 (SWMGFFKPFIVLLPMAGLLLM). The Periplasmic segment spans residues 177 to 181 (EPDFG). The helical transmembrane segment at 182-202 (ATVVMMGAAAAMLFLGGVGLF) threads the bilayer. Residue R203 is a topological domain, cytoplasmic. The chain crosses the membrane as a helical span at residues 204 to 224 (FTLMVVLAVAAVTVLVQAQPY). The Periplasmic segment spans residues 225–283 (RMARLITFTDPWSDQFGSGYQLTQALIAFGRGEWLGVGLGNSVQKQFYLPEAHTDFVFS). Residues 284 to 304 (VLAEELGVVGSLCTVALFVFV) traverse the membrane as a helical segment. Residues 305-321 (CVRGMYIGMWAEKAKQY) lie on the Cytoplasmic side of the membrane. Residues 322-342 (FAAYVAYGLSFLWIGQFLINI) form a helical membrane-spanning segment. The Periplasmic segment spans residues 343–355 (GVNVGLLPTKGLT). Residues 356–376 (LPFLSYGGSSLVICCACLGLL) traverse the membrane as a helical segment. Over 377-407 (LRIEWESRTHLGSEEMEFSESDFAEEPTHGR) the chain is Cytoplasmic.

This sequence belongs to the SEDS family. FtsW subfamily.

It is found in the cell inner membrane. The enzyme catalyses [GlcNAc-(1-&gt;4)-Mur2Ac(oyl-L-Ala-gamma-D-Glu-L-Lys-D-Ala-D-Ala)](n)-di-trans,octa-cis-undecaprenyl diphosphate + beta-D-GlcNAc-(1-&gt;4)-Mur2Ac(oyl-L-Ala-gamma-D-Glu-L-Lys-D-Ala-D-Ala)-di-trans,octa-cis-undecaprenyl diphosphate = [GlcNAc-(1-&gt;4)-Mur2Ac(oyl-L-Ala-gamma-D-Glu-L-Lys-D-Ala-D-Ala)](n+1)-di-trans,octa-cis-undecaprenyl diphosphate + di-trans,octa-cis-undecaprenyl diphosphate + H(+). Its pathway is cell wall biogenesis; peptidoglycan biosynthesis. In terms of biological role, peptidoglycan polymerase that is essential for cell division. In Pseudomonas fluorescens (strain SBW25), this protein is Probable peptidoglycan glycosyltransferase FtsW.